Here is a 246-residue protein sequence, read N- to C-terminus: tRNA pseudouridine synthase A (246 aa).

Asp53 (nucleophile) is an active-site residue. Substrate is bound at residue Tyr111.

It belongs to the tRNA pseudouridine synthase TruA family. In terms of assembly, homodimer.

It carries out the reaction uridine(38/39/40) in tRNA = pseudouridine(38/39/40) in tRNA. In terms of biological role, formation of pseudouridine at positions 38, 39 and 40 in the anticodon stem and loop of transfer RNAs. The polypeptide is tRNA pseudouridine synthase A (Anoxybacillus flavithermus (strain DSM 21510 / WK1)).